The primary structure comprises 1157 residues: Pesticidal crystal protein Cry9Ca (1157 aa).

This sequence belongs to the delta endotoxin family.

In terms of biological role, promotes colloidosmotic lysis by binding to the midgut epithelial cells of Lepidoptera larvae. Has a fairly broad spectrum of activity against members of the Pyralidae, Plutellidae, Sphingidae and Noctuidae families. It was the first insecticidal crystal protein characterized with activity against cutworms. No activity is observed against some beetles, such as the Colorado potato beetle. The protein is Pesticidal crystal protein Cry9Ca (cry9Ca) of Bacillus thuringiensis subsp. tolworthi.